A 338-amino-acid polypeptide reads, in one-letter code: 4-hydroxy-2-oxovalerate aldolase (338 aa).

The Pyruvate carboxyltransferase domain occupies 4-254; sequence PRLTDTTLRD…NPGLDVLALM (251 aa). 12 to 13 lines the substrate pocket; sequence RD. Aspartate 13 contacts Mn(2+). The active-site Proton acceptor is the histidine 16. Substrate-binding residues include serine 166 and histidine 193. Histidine 193 and histidine 195 together coordinate Mn(2+). Tyrosine 284 is a substrate binding site.

This sequence belongs to the 4-hydroxy-2-oxovalerate aldolase family.

The catalysed reaction is (S)-4-hydroxy-2-oxopentanoate = acetaldehyde + pyruvate. The chain is 4-hydroxy-2-oxovalerate aldolase from Roseiflexus sp. (strain RS-1).